The sequence spans 215 residues: MFTGIIEEVGKIAQIHKQGEFAVVTINATKVLQDVHLGDTIAVNGVCLTVTSFSSNQFTADVMSETLKRTSLGELKSNSPVNLERAMAANGRFGGHIVSGHIDGTGEIAEITPAHNSTWYRIKTSPKLMRYIIEKGSITIDGISLTVVDTDDESFRVSIIPHTIKETNLGSKKIGSIVNLENDIVGKYIEQFLLKKPADEPKSNLSLDFLKQAGF.

2 Lumazine-binding repeats span residues 1–96 and 97–193; these read MFTG…FGGH and IVSG…EQFL. 2,4-dihydroxypteridine contacts are provided by residues 4-6, 47-49, 61-66, 100-102, K135, 144-146, and 158-163; these read GII, CLT, DVMSET, GHI, SLT, and SIIPHT.

Homotrimer.

The enzyme catalyses 2 6,7-dimethyl-8-(1-D-ribityl)lumazine + H(+) = 5-amino-6-(D-ribitylamino)uracil + riboflavin. It functions in the pathway cofactor biosynthesis; riboflavin biosynthesis; riboflavin from 2-hydroxy-3-oxobutyl phosphate and 5-amino-6-(D-ribitylamino)uracil: step 2/2. Catalyzes the dismutation of two molecules of 6,7-dimethyl-8-ribityllumazine, resulting in the formation of riboflavin and 5-amino-6-(D-ribitylamino)uracil. The chain is Riboflavin synthase (ribE) from Actinobacillus pleuropneumoniae (Haemophilus pleuropneumoniae).